Consider the following 453-residue polypeptide: Protein LOW PSII ACCUMULATION 1, chloroplastic (453 aa).

A chloroplast-targeting transit peptide spans 1–92; the sequence is MAVATAPSLN…LDLFKRGRVK (92 aa). TPR repeat units lie at residues 75–108 and 112–145; these read AELC…APNP and QAAY…YNLK. Transmembrane regions (helical) follow at residues 202–222 and 238–258; these read FFYF…VPRL and TTGN…LFLW.

In terms of assembly, interacts with psbA, but not with psbD, petB, ALB3, LPA2 or LPA3. Is not a component of the PSII complex.

The protein resides in the plastid. It is found in the chloroplast thylakoid membrane. In terms of biological role, chaperone required for efficient photosystem II (PSII) assembly. Binds to psbA during de novo biogenesis of PSII. The protein is Protein LOW PSII ACCUMULATION 1, chloroplastic (LPA1) of Arabidopsis thaliana (Mouse-ear cress).